The primary structure comprises 592 residues: Pectinesterase/pectinesterase inhibitor 3 (592 aa).

An N-terminal signal peptide occupies residues 1–35 (MAPSMKEIFSKDNFKKNKKLVLLSAAVALLFVAAV). Positions 36–238 (AGISAGASKA…KITSNNRKLK (203 aa)) are cleaved as a propeptide — removed in mature 42 kDa form. The propeptide at 36–273 (AGISAGASKA…WLSAGDRRLL (238 aa)) is removed in mature 38 kDa form. The interval 53 to 212 (PSSHAVLRSS…EHMCSNALAM (160 aa)) is pectinesterase inhibitor 3. Asn-96 and Asn-215 each carry an N-linked (GlcNAc...) asparagine glycan. Residues 281–578 (DATVAADGSG…YTAGQFIGGG (298 aa)) form a pectinesterase 3 region. Residues Thr-356 and Gln-386 each coordinate substrate. The Proton donor; for pectinesterase activity role is filled by Asp-409. Cys-423 and Cys-443 are oxidised to a cystine. Asp-430 functions as the Nucleophile; for pectinesterase activity in the catalytic mechanism. 3 residues coordinate substrate: Gln-454, Arg-498, and Trp-500.

The protein in the N-terminal section; belongs to the PMEI family. In the C-terminal section; belongs to the pectinesterase family. As to quaternary structure, interacts with BIIDXI and At5g11420. Binds reversibly to PMEI4, PMEI7 and PMEI8 to be inhibited; the stability of the PME3-PMEIs complexes and the inhibition of the pectin methylesterase (PME) activity is pH-dependent, based on protonation status of amino-acids at the complex interface. As to expression, expressed in roots, cotyledons, hypocotyls, seedlings, leaves, stems, flowers, dry seeds and siliques. Accumulates in etiolated hypocotyls (at protein level).

The protein localises to the secreted. Its subcellular location is the extracellular space. It localises to the apoplast. It is found in the cell wall. It carries out the reaction [(1-&gt;4)-alpha-D-galacturonosyl methyl ester](n) + n H2O = [(1-&gt;4)-alpha-D-galacturonosyl](n) + n methanol + n H(+). The protein operates within glycan metabolism; pectin degradation; 2-dehydro-3-deoxy-D-gluconate from pectin: step 1/5. Regulated negatively by pectinesterase inhibitors (e.g. PMEI3, PMEI4, PMEI7 and PMEI9) in a pH-dependent manner, mainly in slightly acidic conditions (pH 6.0 and 5.0), especially in dark-grown hypocotyls; this processus relies on changes in the protonation of amino acids involved in intermolecular and intramolecular interactions. In terms of biological role, acts in the modification of cell walls via demethylesterification of cell wall pectin. Required for zinc Zn(2+) homeostasis and to monitor Zn(2+) influence on cell wall-controlled growth processes such as root cell elongation. Monitors seed germination and favors root hairs production. Prevents cruciferin seed storage proteins activity, but promotes the expression of genes involved in cell wall organization and remodeling as well as genes involved in lipid and protein metabolism, during post-germinative growth of seedlings. Confers sensitivity to Zn(2+) when overexpressed. Acts as a susceptibility factor required for the initial colonization of the host tissue by virulent pathogens including Botrytis cinerea and Pectobacterium carotovorum, probably by facilitating cell wall pectine degradation by pathogen pectic enzymes after its demethylesterification. The polypeptide is Pectinesterase/pectinesterase inhibitor 3 (Arabidopsis thaliana (Mouse-ear cress)).